A 499-amino-acid polypeptide reads, in one-letter code: Xylulose kinase (499 aa).

Residue 81–82 (MH) coordinates substrate. The Proton acceptor role is filled by Asp239.

It belongs to the FGGY kinase family.

The enzyme catalyses D-xylulose + ATP = D-xylulose 5-phosphate + ADP + H(+). Catalyzes the phosphorylation of D-xylulose to D-xylulose 5-phosphate. In Bacillus subtilis (strain 168), this protein is Xylulose kinase.